The following is a 105-amino-acid chain: UPF0235 protein Mext_2130 (105 aa).

This sequence belongs to the UPF0235 family.

This chain is UPF0235 protein Mext_2130, found in Methylorubrum extorquens (strain PA1) (Methylobacterium extorquens).